We begin with the raw amino-acid sequence, 115 residues long: NADH-ubiquinone oxidoreductase chain 3 (115 aa).

The next 3 membrane-spanning stretches (helical) occupy residues 4–24, 55–75, and 87–107; these read LLVL…AFWL, FFLV…LLPL, and MTLT…YEWL.

Belongs to the complex I subunit 3 family. In terms of assembly, core subunit of respiratory chain NADH dehydrogenase (Complex I) which is composed of 45 different subunits. Interacts with TMEM186. Interacts with TMEM242.

The protein resides in the mitochondrion inner membrane. The enzyme catalyses a ubiquinone + NADH + 5 H(+)(in) = a ubiquinol + NAD(+) + 4 H(+)(out). Core subunit of the mitochondrial membrane respiratory chain NADH dehydrogenase (Complex I) which catalyzes electron transfer from NADH through the respiratory chain, using ubiquinone as an electron acceptor. Essential for the catalytic activity of complex I. This chain is NADH-ubiquinone oxidoreductase chain 3, found in Peromyscus eremicus (Cactus mouse).